Reading from the N-terminus, the 572-residue chain is Phosphoglucomutase-2 (572 aa).

Substrate contacts are provided by residues Thr23, Arg27, 126–127 (SH), and Lys140. Ser126 serves as the catalytic Phosphoserine intermediate. Residue Ser126 coordinates Mg(2+). Mg(2+) is bound by residues Asp308, Asp310, and Asp312. Residues 312 to 313 (DR), Thr373, 392 to 394 (EES), Lys405, and Arg527 each bind substrate.

Belongs to the phosphohexose mutase family. Mg(2+) serves as cofactor. In terms of processing, phosphorylated via a calcium-dependent protein kinase.

It localises to the cytoplasm. It catalyses the reaction alpha-D-glucose 1-phosphate = alpha-D-glucose 6-phosphate. May be involved in membrane fusion in exocytosis. The chain is Phosphoglucomutase-2 (pp63-2) from Paramecium tetraurelia.